Here is a 134-residue protein sequence, read N- to C-terminus: Probable glycine cleavage system H protein (134 aa).

The region spanning 29 to 110 (TVLVGITDYA…PYGAWIAKIK (82 aa)) is the Lipoyl-binding domain. At Lys70 the chain carries N6-lipoyllysine.

It belongs to the GcvH family. In terms of assembly, the glycine cleavage system is composed of four proteins: P, T, L and H. (R)-lipoate is required as a cofactor.

In terms of biological role, the glycine cleavage system catalyzes the degradation of glycine. The H protein shuttles the methylamine group of glycine from the P protein to the T protein. This is Probable glycine cleavage system H protein from Pyrococcus horikoshii (strain ATCC 700860 / DSM 12428 / JCM 9974 / NBRC 100139 / OT-3).